We begin with the raw amino-acid sequence, 337 residues long: Adenine deaminase (337 aa).

The Zn(2+) site is built by histidine 14, histidine 16, and histidine 194. Catalysis depends on glutamate 197, which acts as the Proton donor. Aspartate 275 contacts Zn(2+). Aspartate 276 serves as a coordination point for substrate.

The protein belongs to the metallo-dependent hydrolases superfamily. Adenosine and AMP deaminases family. Adenine deaminase type 2 subfamily. The cofactor is Zn(2+).

The enzyme catalyses adenine + H2O + H(+) = hypoxanthine + NH4(+). Its function is as follows. Catalyzes the hydrolytic deamination of adenine to hypoxanthine. Plays an important role in the purine salvage pathway and in nitrogen catabolism. The polypeptide is Adenine deaminase (Vibrio parahaemolyticus serotype O3:K6 (strain RIMD 2210633)).